A 260-amino-acid chain; its full sequence is Trialysin (260 aa).

A signal peptide spans 1-19 (MSKFWLLLLLVAAFQFAHS). Positions 20 to 55 (YPAAEYELDETTNDEVRQFIGDGYFEDEGDDGDEER) are cleaved as a propeptide — removed in mature form, probably by the serine protease triapsin.

The protein belongs to the redulysin-like family. Expressed in salivary glands.

The protein localises to the secreted. Its subcellular location is the target cell membrane. Pore-forming protein that induces lysis of T.cruzi trypomastigotes, bacteria E.coli and human red blood cells. The parasite lysis is much more important than the hemolysis, probably due to difference in membrane composition. Its action on protozoan parasites and bacteria may indicate a role in the control of microorganism growth in the salivary glands. The chain is Trialysin from Triatoma infestans (Assassin bug).